Consider the following 357-residue polypeptide: Transactivator protein DR7 (357 aa).

Residues 107–187 (LVGKDGAVYV…LLTVGGLCQT (81 aa)) form an interaction with host p53 region.

Belongs to the herpesviridae US22 family. Interacts with host p53 and inhibits p53-activated transcription.

In terms of biological role, involved in transactivation. Displays transforming activity. This is Transactivator protein DR7 (DR7L) from Homo sapiens (Human).